Consider the following 921-residue polypeptide: cGMP-dependent 3',5'-cyclic phosphodiesterase (921 aa).

The residue at position 1 (Met1) is an N-acetylmethionine. 2 disordered regions span residues 1 to 21 (MRRQPAASRDLFAQEPVPPGS) and 177 to 198 (ESSVAPEATQNPPEEAAGDQKG). Residues 177–188 (ESSVAPEATQNP) show a composition bias toward polar residues. GAF domains lie at 220–357 (DASS…STVL) and 389–528 (DVSV…GISI). 3',5'-cyclic GMP is bound by residues Ser411, Asp426, Ile445, Tyr468, and Thr479. One can recognise a PDEase domain in the interval 558–882 (SDDEYTKLLH…EHWTKVSHKF (325 aa)). Residue His636 is the Proton donor of the active site. His640, His676, Asp677, and Asp788 together coordinate Zn(2+). Asp677 is a Mg(2+) binding site.

The protein belongs to the cyclic nucleotide phosphodiesterase family. PDE2 subfamily. As to quaternary structure, homodimer. Requires Zn(2+) as cofactor. Mg(2+) serves as cofactor.

The protein localises to the cell membrane. It is found in the cytoplasm. Its subcellular location is the mitochondrion. The protein resides in the mitochondrion inner membrane. It localises to the mitochondrion outer membrane. The catalysed reaction is a nucleoside 3',5'-cyclic phosphate + H2O = a nucleoside 5'-phosphate + H(+). It carries out the reaction 3',5'-cyclic GMP + H2O = GMP + H(+). The enzyme catalyses 3',5'-cyclic AMP + H2O = AMP + H(+). Its activity is regulated as follows. The 3',5'-cyclic-AMP phosphodiesterase activity is stimulated by 3',5'-cyclic GMP. CGMP-activated cyclic nucleotide phosphodiesterase with a dual-specificity for the second messengers cAMP and cGMP, which are key regulators of many important physiological processes. Has a higher efficiency with cGMP compared to cAMP. Plays a role in cell growth and migration. Functionally, regulates mitochondrial cAMP levels and respiration. Involved in the regulation of mitochondria morphology/dynamics and apoptotic cell death via local modulation of cAMP/PKA signaling in the mitochondrion, including the monitoring of local cAMP levels at the outer mitochondrial membrane and of PKA-dependent phosphorylation of DNM1L. The sequence is that of cGMP-dependent 3',5'-cyclic phosphodiesterase from Bos taurus (Bovine).